A 656-amino-acid polypeptide reads, in one-letter code: NADH-ubiquinone oxidoreductase chain 5 (656 aa).

17 helical membrane passes run T4–R21, A28–V50, L81–Y103, R112–T129, Y133–F155, T176–F198, I208–H230, V243–R262, T272–F294, V301–L319, L329–A351, E364–M386, I409–L431, L452–L471, F514–I536, S603–F625, and L629–L651.

The protein belongs to the complex I subunit 5 family.

Its subcellular location is the mitochondrion inner membrane. The enzyme catalyses a ubiquinone + NADH + 5 H(+)(in) = a ubiquinol + NAD(+) + 4 H(+)(out). Functionally, core subunit of the mitochondrial membrane respiratory chain NADH dehydrogenase (Complex I) that is believed to belong to the minimal assembly required for catalysis. Complex I functions in the transfer of electrons from NADH to the respiratory chain. The immediate electron acceptor for the enzyme is believed to be ubiquinone. The chain is NADH-ubiquinone oxidoreductase chain 5 (nad5) from Aspergillus niger.